The primary structure comprises 476 residues: ATP synthase subunit beta (476 aa).

G154–T161 contacts ATP.

This sequence belongs to the ATPase alpha/beta chains family. In terms of assembly, F-type ATPases have 2 components, CF(1) - the catalytic core - and CF(0) - the membrane proton channel. CF(1) has five subunits: alpha(3), beta(3), gamma(1), delta(1), epsilon(1). CF(0) has four main subunits: a(1), b(1), b'(1) and c(9-12).

It is found in the cell inner membrane. It carries out the reaction ATP + H2O + 4 H(+)(in) = ADP + phosphate + 5 H(+)(out). In terms of biological role, produces ATP from ADP in the presence of a proton gradient across the membrane. The catalytic sites are hosted primarily by the beta subunits. This chain is ATP synthase subunit beta, found in Rhodopseudomonas palustris (strain ATCC BAA-98 / CGA009).